Here is a 111-residue protein sequence, read N- to C-terminus: Cytochrome c (111 aa).

Residue Ser1 is modified to N-acetylserine. Residues Cys22, Cys25, and His26 each contribute to the heme c site. Lys80 carries the N6,N6,N6-trimethyllysine modification. Residue Met88 coordinates heme c.

This sequence belongs to the cytochrome c family. Binds 1 heme c group covalently per subunit.

The protein localises to the mitochondrion intermembrane space. Its function is as follows. Electron carrier protein. The oxidized form of the cytochrome c heme group can accept an electron from the heme group of the cytochrome c1 subunit of cytochrome reductase. Cytochrome c then transfers this electron to the cytochrome oxidase complex, the final protein carrier in the mitochondrial electron-transport chain. This Ulva intestinalis (Hollow green nori) protein is Cytochrome c.